Consider the following 539-residue polypeptide: Cytochrome c oxidase subunit 1 homolog, bacteroid (539 aa).

A run of 3 helical transmembrane segments spans residues 4–24 (TVEMVVLSVGAFLALVGAGLA), 28–48 (LFGAHMWVLFFALLAGTLVLM), and 75–95 (GVVATVFWGVVGFLVGVVVAL). A heme b-binding site is contributed by His117. 8 helical membrane-spanning segments follow: residues 118–138 (TSAVIFAFGGNALIATSFYVV), 154–174 (FVFWGYQLFIVLAASGYLLGI), 187–207 (VDLWLTIVWVAYLVAFLGTIM), 214–234 (IYVANWFYLAFIVTIAMLHVV), 265–285 (GHNAVGFFLTAGFLAMMYYFI), 298–318 (LSIIHFWAIIFMYIWAGPHHL), 330–350 (LGMVFSIMLWMPSWGGMINGL), and 368–388 (MMVMAVAFYGMATFEGPMMSI). Cu cation is bound by residues His266, His316, and His317. 2 residues coordinate heme b: His404 and His406. Transmembrane regions (helical) follow at residues 405-425 (VHSGALGWNGLITFGAIYYLV), 443-463 (HFWLATLGIVVYAAVMWVAGI), 475-495 (QGFLVYSFAETVAAMFPYYVM), and 499-519 (GGALFLAGALLMAFNVTMTIL).

The protein belongs to the heme-copper respiratory oxidase family. Requires Cu(2+) as cofactor. The cofactor is heme b.

It localises to the cell membrane. The enzyme catalyses 4 Fe(II)-[cytochrome c] + O2 + 8 H(+)(in) = 4 Fe(III)-[cytochrome c] + 2 H2O + 4 H(+)(out). Its pathway is energy metabolism; oxidative phosphorylation. Cytochrome c oxidase is the component of the respiratory chain that catalyzes the reduction of oxygen to water. Subunits 1-3 form the functional core of the enzyme complex. Co I is the catalytic subunit of the enzyme. Electrons originating in cytochrome c or a quinol are transferred to the bimetallic center formed by a high-spin heme and copper B. The polypeptide is Cytochrome c oxidase subunit 1 homolog, bacteroid (fixN) (Rhizobium meliloti (strain 1021) (Ensifer meliloti)).